A 485-amino-acid chain; its full sequence is Glucagon receptor (485 aa).

The first 26 residues, 1 to 26 (MPLTQLHCPHLLLLLLVLSCLPEAPS), serve as a signal peptide directing secretion. The Extracellular segment spans residues 27–137 (AQVMDFLFEK…EIEVQKGVAK (111 aa)). Cystine bridges form between cysteine 44–cysteine 68, cysteine 59–cysteine 101, and cysteine 82–cysteine 122. 5 N-linked (GlcNAc...) asparagine glycosylation sites follow: asparagine 47, asparagine 60, asparagine 75, asparagine 79, and asparagine 118. A helical membrane pass occupies residues 138 to 162 (MYSSQQVMYTVGYSLSLGALLLALV). The Cytoplasmic portion of the chain corresponds to 163 to 174 (ILLGLRKLHCTR). A helical transmembrane segment spans residues 175–199 (NYIHGNLFASFVLKAGSVLVIDWLL). Residues 200–226 (KTRYSQKIGDDLSVSVWLSDGAMAGCR) lie on the Extracellular side of the membrane. Residues cysteine 225 and cysteine 295 are joined by a disulfide bond. A helical membrane pass occupies residues 227–250 (VATVIMQYGIIANYCWLLVEGVYL). Over 251–264 (YSLLSLATFSERSF) the chain is Cytoplasmic. A helical membrane pass occupies residues 265–286 (FSLYLGIGWGAPLLFVIPWVVV). Residues 287-304 (KCLFENVQCWTSNDNMGF) lie on the Extracellular side of the membrane. The helical transmembrane segment at 305 to 327 (WWILRIPVFLALLINFFIFVHII) threads the bilayer. The Cytoplasmic portion of the chain corresponds to 328-351 (HLLVAKLRAHQMHYADYKFRLARS). Residues 351–354 (STLT) form an important for allosteric inhibitor binding region. The helical transmembrane segment at 352-370 (TLTLIPLLGVHEVVFAFVT) threads the bilayer. Topologically, residues 371 to 382 (DEHAQGTLRSTK) are extracellular. A helical transmembrane segment spans residues 383 to 403 (LFFDLFLSSFQGLLVAVLYCF). The Cytoplasmic segment spans residues 404 to 485 (LNKEVQAELM…SLPRLADSPT (82 aa)). The span at 457 to 475 (AGSSSGTGCVPSMETSLAS) shows a compositional bias: polar residues. The disordered stretch occupies residues 457–485 (AGSSSGTGCVPSMETSLASSLPRLADSPT). Serine 460 and serine 476 each carry phosphoserine.

This sequence belongs to the G-protein coupled receptor 2 family. Post-translationally, ligand-binding promotes phosphorylation of serine residues in the C-terminal cytoplasmic domain. Phosphorylation is important for receptor endocytosis after ligand-binding. Expressed predominantly in liver, kidney, adrenal, lung and stomach, while lower levels of expression are detected in brown and white adipose tissue, cerebellum, duodenum and heart.

The protein localises to the cell membrane. G-protein coupled receptor for glucagon that plays a central role in the regulation of blood glucose levels and glucose homeostasis. Regulates the rate of hepatic glucose production by promoting glycogen hydrolysis and gluconeogenesis. Plays an important role in mediating the responses to fasting. Ligand binding causes a conformation change that triggers signaling via guanine nucleotide-binding proteins (G proteins) and modulates the activity of down-stream effectors, such as adenylate cyclase. Promotes activation of adenylate cyclase. Besides, plays a role in signaling via a phosphatidylinositol-calcium second messenger system. The polypeptide is Glucagon receptor (Gcgr) (Mus musculus (Mouse)).